The sequence spans 196 residues: Secreted effector protein SseB (196 aa).

Belongs to the EspA/SseB family. In terms of assembly, may form a complex with SseC and SseD. Binds to the chaperone SseA.

The protein localises to the secreted. It localises to the cell surface. Its function is as follows. Effector proteins function to alter host cell physiology and promote bacterial survival in host tissues. May act as a translocator that mediates translocation of SPI-2 T3SS effector proteins from intraphagosomal bacterial cells into the host cells. SseB is required for correct localization of SseC and SseD on the bacterial cell surface. This Salmonella typhimurium (strain LT2 / SGSC1412 / ATCC 700720) protein is Secreted effector protein SseB (sseB).